A 247-amino-acid chain; its full sequence is ATP synthase subunit a, chloroplastic (247 aa).

The next 5 helical transmembrane spans lie at 38 to 58, 95 to 115, 134 to 154, 199 to 219, and 220 to 240; these read QVLITSWVVIAILLGSATIAV, VPFIGTMFLFIFVSNWSGALL, INTTVALALLTSVAYFYAGLT, LVVVVLVSLVPSVVPIPVMFL, and GLFTSGIQALIFATLAAAYIG.

Belongs to the ATPase A chain family. As to quaternary structure, F-type ATPases have 2 components, CF(1) - the catalytic core - and CF(0) - the membrane proton channel. CF(1) has five subunits: alpha(3), beta(3), gamma(1), delta(1), epsilon(1). CF(0) has four main subunits: a, b, b' and c.

The protein resides in the plastid. The protein localises to the chloroplast thylakoid membrane. Functionally, key component of the proton channel; it plays a direct role in the translocation of protons across the membrane. This is ATP synthase subunit a, chloroplastic from Panax ginseng (Korean ginseng).